A 294-amino-acid chain; its full sequence is tRNA pseudouridine synthase B (294 aa).

Asp-38 (nucleophile) is an active-site residue.

It belongs to the pseudouridine synthase TruB family. Type 1 subfamily.

It catalyses the reaction uridine(55) in tRNA = pseudouridine(55) in tRNA. Responsible for synthesis of pseudouridine from uracil-55 in the psi GC loop of transfer RNAs. In Clostridium perfringens (strain 13 / Type A), this protein is tRNA pseudouridine synthase B.